A 541-amino-acid chain; its full sequence is MTTAHSAPRDNSDKPVIWTVSVTRLFELFRDISLEFDHLATITPIQLGFEKAVTYIRKKLATERCDAIIAAGSNGAYLKSRLSIPVILIKPSGFDVLQALAKAGKLTSSIGIVTYQETIPALLAFQKTFHLRLEQRSYVTEEDARGQINELKANGIEAVVGAGLITDLAEEAGMTAIFIYSAATVRQAFHDALDMTRLTRRQRVDYPSGKGLQTRYELGDIRGQSPQMEQLRQTITLYARSRAAVLIQGETGTGKELAAQAIHQTFFHRQPHRQNKPSPPFVAVNCGAITESLLEAELFGYEEGAFTGSRRGGRAGLFEIAHGGTLFLDEIGEMPLPLQTRLLRVLEEKAVTRVGGHQPIPVDVRVISATHCDLDREIMQGRFRPDLFYRLSILRLTLPPLRERQADILPLAESFLKQSLAAMEIPFTESIRHGLTQCQPLLLAWRWPGNIRELRNMMERLALFLSVDPAPTLDRQFMRQLLPELMVNTAELTPSTVDANALQDVLARFKGDKTAAARYLGISRTTLWRRLKAGAKDQSDN.

Residues 221-464 (IRGQSPQMEQ…RNMMERLALF (244 aa)) enclose the Sigma-54 factor interaction domain. 321–330 (AHGGTLFLDE) serves as a coordination point for ATP. Positions 513–532 (KTAAARYLGISRTTLWRRLK) form a DNA-binding region, H-T-H motif.

Functionally, involved in the transcriptional regulation of the propionate catabolism operon. The polypeptide is Propionate catabolism operon regulatory protein (prpR) (Salmonella typhimurium (strain LT2 / SGSC1412 / ATCC 700720)).